We begin with the raw amino-acid sequence, 736 residues long: Nucleoporin nup60 (736 aa).

The interval 1-46 (MSSGPIRTLHKGKAARNRTPYDRIAASKDGNHSNGPQTPSKSIFQR) is disordered. Residues 19-31 (TPYDRIAASKDGN) are compositionally biased toward basic and acidic residues. Over residues 32–43 (HSNGPQTPSKSI) the composition is skewed to polar residues. Phosphoserine is present on residues serine 157, serine 159, serine 161, and serine 162. 5 disordered regions span residues 178–210 (RAAAISKRESGVSSEPRARTSSLTPGNTPNSAK), 295–321 (DTSFTNVPTSSPLHQSTTANHPEKTPS), 338–519 (TPSI…PNET), 565–614 (AVTD…RSLF), and 647–701 (EQAE…FPKF). Polar residues-rich tracts occupy residues 196 to 210 (RTSSLTPGNTPNSAK) and 295 to 314 (DTSFTNVPTSSPLHQSTTAN). Positions 375–397 (QIRPSSEKSEPEKKEPSAFETLE) are enriched in basic and acidic residues. Over residues 456 to 473 (SATTDKPSPPVSSIFSFN) the composition is skewed to polar residues. Low complexity-rich tracts occupy residues 474 to 505 (APSAASTKPSPAVSSTFSFNAPTTTPSATSFS) and 573 to 587 (EVSSSNQASSSTMIS). Polar residues predominate over residues 588–597 (QPNTGFSFGS). Residues 664-692 (EVEKPSAEGTNEHKQDATMTLEKTDKQGS) are compositionally biased toward basic and acidic residues.

As to quaternary structure, component of the nuclear pore complex (NPC). NPC constitutes the exclusive means of nucleocytoplasmic transport. NPCs allow the passive diffusion of ions and small molecules and the active, nuclear transport receptor-mediated bidirectional transport of macromolecules such as proteins, RNAs, ribonucleoparticles (RNPs), and ribosomal subunits across the nuclear envelope.

It is found in the nucleus. Its subcellular location is the nuclear pore complex. The protein resides in the nucleus membrane. Functions as a component of the nuclear pore complex (NPC). NPC components, collectively referred to as nucleoporins (NUPs), can play the role of both NPC structural components and of docking or interaction partners for transiently associated nuclear transport factors. Active directional transport is assured by both, a Phe-Gly (FG) repeat affinity gradient for these transport factors across the NPC and a transport cofactor concentration gradient across the nuclear envelope. This is Nucleoporin nup60 (nup60) from Schizosaccharomyces pombe (strain 972 / ATCC 24843) (Fission yeast).